The sequence spans 1057 residues: Carbamoyl phosphate synthase large chain (1057 aa).

The segment at 1–401 (MPKREDINKI…ATQKAIRSLD (401 aa)) is carboxyphosphate synthetic domain. The ATP site is built by Arg-129, Arg-169, Gly-175, Gly-176, Gln-208, Ile-210, Glu-215, Gly-241, Ile-242, His-243, Gln-284, and Glu-298. Positions 133–327 (RALMNDLNEP…IAKVAAKIAV (195 aa)) constitute an ATP-grasp 1 domain. 3 residues coordinate Mg(2+): Gln-284, Glu-298, and Asn-300. Residues Gln-284, Glu-298, and Asn-300 each coordinate Mn(2+). The interval 402–546 (IDINYIGDEE…YSTYELENES (145 aa)) is oligomerization domain. The interval 547 to 929 (IVSNRKSIVV…ALYKAFEGAK (383 aa)) is carbamoyl phosphate synthetic domain. Positions 671 to 861 (NKLIQANGIR…MARLATRAIL (191 aa)) constitute an ATP-grasp 2 domain. Residues Arg-707, Gln-746, Leu-748, Glu-752, Gly-777, Val-778, His-779, Ser-780, Gln-820, and Glu-832 each contribute to the ATP site. Residues Gln-820, Glu-832, and Asn-834 each contribute to the Mg(2+) site. Mn(2+) is bound by residues Gln-820, Glu-832, and Asn-834. An MGS-like domain is found at 930–1057 (MHMPDHGKVL…ESQAFTTLHL (128 aa)). The interval 930–1057 (MHMPDHGKVL…ESQAFTTLHL (128 aa)) is allosteric domain.

This sequence belongs to the CarB family. As to quaternary structure, composed of two chains; the small (or glutamine) chain promotes the hydrolysis of glutamine to ammonia, which is used by the large (or ammonia) chain to synthesize carbamoyl phosphate. Tetramer of heterodimers (alpha,beta)4. It depends on Mg(2+) as a cofactor. Requires Mn(2+) as cofactor.

It catalyses the reaction hydrogencarbonate + L-glutamine + 2 ATP + H2O = carbamoyl phosphate + L-glutamate + 2 ADP + phosphate + 2 H(+). It carries out the reaction hydrogencarbonate + NH4(+) + 2 ATP = carbamoyl phosphate + 2 ADP + phosphate + 2 H(+). Its pathway is amino-acid biosynthesis; L-arginine biosynthesis; carbamoyl phosphate from bicarbonate: step 1/1. It participates in pyrimidine metabolism; UMP biosynthesis via de novo pathway; (S)-dihydroorotate from bicarbonate: step 1/3. In terms of biological role, large subunit of the glutamine-dependent carbamoyl phosphate synthetase (CPSase). CPSase catalyzes the formation of carbamoyl phosphate from the ammonia moiety of glutamine, carbonate, and phosphate donated by ATP, constituting the first step of 2 biosynthetic pathways, one leading to arginine and/or urea and the other to pyrimidine nucleotides. The large subunit (synthetase) binds the substrates ammonia (free or transferred from glutamine from the small subunit), hydrogencarbonate and ATP and carries out an ATP-coupled ligase reaction, activating hydrogencarbonate by forming carboxy phosphate which reacts with ammonia to form carbamoyl phosphate. This Pediococcus pentosaceus (strain ATCC 25745 / CCUG 21536 / LMG 10740 / 183-1w) protein is Carbamoyl phosphate synthase large chain.